Consider the following 127-residue polypeptide: Protein ApaG (127 aa).

The region spanning 3 to 127 is the ApaG domain; sequence DDPRYRVEVE…FVLSVPRTLH (125 aa).

The sequence is that of Protein ApaG from Xanthomonas euvesicatoria pv. vesicatoria (strain 85-10) (Xanthomonas campestris pv. vesicatoria).